Reading from the N-terminus, the 1215-residue chain is Cellulose synthase-like protein D4 (1215 aa).

Disordered stretches follow at residues 24 to 46 and 206 to 231; these read GGDA…SLGS and SDTD…ERDQ. The segment covering 207-222 has biased composition (acidic residues); sequence DTDESDSVTDDDDDEA. A run of 2 helical transmembrane segments spans residues 321 to 341 and 352 to 372; these read AILS…GFFL and AVWL…SWLL. Active-site residues include D452 and D905. Transmembrane regions (helical) follow at residues 988 to 1008, 1014 to 1034, 1060 to 1080, 1114 to 1134, 1147 to 1167, and 1177 to 1197; these read VFLL…KFIV, TFLA…LLEI, PAAV…SFTL, LMVP…VAAA, LLGG…FAKG, and TIVF…WVYI.

It belongs to the glycosyltransferase 2 family. Plant cellulose synthase-like D subfamily.

Its subcellular location is the golgi apparatus membrane. Thought to be a Golgi-localized beta-glycan synthase that polymerize the backbones of noncellulosic polysaccharides (hemicelluloses) of plant cell wall. This chain is Cellulose synthase-like protein D4 (CSLD4), found in Oryza sativa subsp. japonica (Rice).